A 103-amino-acid chain; its full sequence is Large ribosomal subunit protein bL21 (103 aa).

Belongs to the bacterial ribosomal protein bL21 family. Part of the 50S ribosomal subunit. Contacts protein L20.

Functionally, this protein binds to 23S rRNA in the presence of protein L20. This is Large ribosomal subunit protein bL21 from Mycobacterium sp. (strain JLS).